The primary structure comprises 298 residues: Small ribosomal subunit biogenesis GTPase RsgA (298 aa).

A CP-type G domain is found at 67–228 (TNELVRPPIS…IADTPGFSSL (162 aa)). Residues 116-119 (TKMD) and 171-179 (GQSGVGKSS) contribute to the GTP site. Zn(2+) is bound by residues C252, C257, H259, and C265.

This sequence belongs to the TRAFAC class YlqF/YawG GTPase family. RsgA subfamily. As to quaternary structure, monomer. Associates with 30S ribosomal subunit, binds 16S rRNA. Requires Zn(2+) as cofactor.

It localises to the cytoplasm. Functionally, one of several proteins that assist in the late maturation steps of the functional core of the 30S ribosomal subunit. Helps release RbfA from mature subunits. May play a role in the assembly of ribosomal proteins into the subunit. Circularly permuted GTPase that catalyzes slow GTP hydrolysis, GTPase activity is stimulated by the 30S ribosomal subunit. The chain is Small ribosomal subunit biogenesis GTPase RsgA from Bacillus pumilus (strain SAFR-032).